Consider the following 301-residue polypeptide: Probable alpha-L-glutamate ligase (301 aa).

The ATP-grasp domain maps to 104–287 (LQFLSRKGID…IAGMIIEFIE (184 aa)). Residues K141, 178–179 (EF), D187, and 211–213 (RSN) each bind ATP. Mg(2+)-binding residues include D248, E260, and N262. Residues D248, E260, and N262 each contribute to the Mn(2+) site.

It belongs to the RimK family. The cofactor is Mg(2+). Mn(2+) serves as cofactor.

The polypeptide is Probable alpha-L-glutamate ligase (Coxiella burnetii (strain CbuK_Q154) (Coxiella burnetii (strain Q154))).